A 36-amino-acid polypeptide reads, in one-letter code: Mu/kappa-theraphotoxin-Ap1a (36 aa).

3 cysteine pairs are disulfide-bonded: Cys3/Cys18, Cys10/Cys23, and Cys17/Cys30. Phe36 carries the phenylalanine amide modification.

It belongs to the neurotoxin 10 (Hwtx-1) family. As to expression, expressed by the venom gland.

The protein resides in the secreted. In terms of biological role, inhibitor of voltage-gated potassium and sodium channels. Among other potassium channels, it selectively inhibits Kv10.1/KCNH1/EAG1 (IC(50)=236 nM) by shifting the voltage dependence of channel activation in a depolarising direction, it shows a maximum inhibition of 80% at saturating concentrations, it shows fast on-rates, and is poorly reversible. It also slightly affects channel inactivation, when the membrane is highly depolarised (&gt;+80 mV). It shows similar potency on Nav1.7/SCN9A (IC(50)=222 nM) and lower potency on Nav1.2/SCN2A (IC(50)=519 nM). The chain is Mu/kappa-theraphotoxin-Ap1a from Avicularia purpurea (Ecuadorian purple pinktoe tarantula).